A 346-amino-acid polypeptide reads, in one-letter code: 4-hydroxy-2-oxovalerate aldolase (346 aa).

The region spanning 8–260 is the Pyruvate carboxyltransferase domain; it reads VTVHDMTLRD…ETGVDVFKIQ (253 aa). Substrate is bound at residue 16–17; it reads RD. Aspartate 17 contacts Mn(2+). The Proton acceptor role is filled by histidine 20. Substrate contacts are provided by serine 170 and histidine 199. The Mn(2+) site is built by histidine 199 and histidine 201. Tyrosine 290 contributes to the substrate binding site.

It belongs to the 4-hydroxy-2-oxovalerate aldolase family.

The catalysed reaction is (S)-4-hydroxy-2-oxopentanoate = acetaldehyde + pyruvate. The chain is 4-hydroxy-2-oxovalerate aldolase from Polaromonas naphthalenivorans (strain CJ2).